The primary structure comprises 399 residues: Semaphorin-like protein 139 (399 aa).

Positions 1–14 (MIPLLFILFYFTNC) are cleaved as a signal peptide. One can recognise a Sema domain in the interval 15–399 (IEWHKFETSE…IPRMKKILKM (385 aa)).

The protein belongs to the semaphorin family. In terms of assembly, interacts with host VESPR.

It is found in the secreted. Functionally, acts as a semaphorin-like protein and binds to host plexin C1 receptor. May alter the movement of plexin C1-expressing cells including dendritic cells, monocytes, or granulocytes in the proximity of infected cells. May also regulate host cell cytoskeleton of neighboring cells to improve viral infection. This Ectromelia virus (strain Moscow) (ECTV) protein is Semaphorin-like protein 139 (EVM139).